The primary structure comprises 250 residues: Beta-crystallin B1 (250 aa).

Over residues 1 to 13 (MSQAAKASATTAV) the composition is skewed to polar residues. The segment at 1 to 49 (MSQAAKASATTAVNPGPDGKGKGAPSTGPAPAPGPTPVPASVPRPAAKV) is disordered. N-acetylserine is present on Ser2. The interval 2 to 56 (SQAAKASATTAVNPGPDGKGKGAPSTGPAPAPGPTPVPASVPRPAAKVGDLPPGS) is N-terminal arm. Residues 28–42 (GPAPAPGPTPVPASV) are compositionally biased toward pro residues. Beta/gamma crystallin 'Greek key' domains lie at 57-96 (YRLIVFEQENFQGRRVEFSGECLNLGDRGFDRVRSLIVVS) and 97-141 (GPWV…RPIR). Residues 142–146 (MDSQE) form a connecting peptide region. 2 consecutive Beta/gamma crystallin 'Greek key' domains span residues 147–188 (HKIC…TVSG) and 189–231 (GTWV…RRLR). A C-terminal arm region spans residues 233–250 (RQWHQEGCFPVLTAEPPK).

This sequence belongs to the beta/gamma-crystallin family. As to quaternary structure, homo/heterodimer, or complexes of higher-order. The structure of beta-crystallin oligomers seems to be stabilized through interactions between the N-terminal arms. In terms of processing, specific cleavages in the N-terminal arm occur during lens maturation and give rise to truncated forms, leading to impaired oligomerization and protein insolubilization. The protease responsible for this partial degradation could be calpain II.

In terms of biological role, crystallins are the dominant structural components of the vertebrate eye lens. The protein is Beta-crystallin B1 (Crybb1) of Mus musculus (Mouse).